Consider the following 164-residue polypeptide: Peptide deformylase (164 aa).

2 residues coordinate Fe cation: cysteine 87 and histidine 129. Residue glutamate 130 is part of the active site. Histidine 133 contacts Fe cation.

It belongs to the polypeptide deformylase family. The cofactor is Fe(2+).

It catalyses the reaction N-terminal N-formyl-L-methionyl-[peptide] + H2O = N-terminal L-methionyl-[peptide] + formate. Functionally, removes the formyl group from the N-terminal Met of newly synthesized proteins. Requires at least a dipeptide for an efficient rate of reaction. N-terminal L-methionine is a prerequisite for activity but the enzyme has broad specificity at other positions. This is Peptide deformylase from Thermotoga petrophila (strain ATCC BAA-488 / DSM 13995 / JCM 10881 / RKU-1).